We begin with the raw amino-acid sequence, 322 residues long: DNA repair and recombination protein RadA (322 aa).

An ATP-binding site is contributed by 105-112; it reads GMYGSGKT.

Belongs to the eukaryotic RecA-like protein family.

Its function is as follows. Involved in DNA repair and in homologous recombination. Binds and assemble on single-stranded DNA to form a nucleoprotein filament. Hydrolyzes ATP in a ssDNA-dependent manner and promotes DNA strand exchange between homologous DNA molecules. The polypeptide is DNA repair and recombination protein RadA (Methanococcus maripaludis (strain C6 / ATCC BAA-1332)).